The sequence spans 226 residues: Protein YOP1 homolog (226 aa).

Positions 1–25 (MRMSKLYKNKEKENEKPSNEPPIKQ) are disordered. At 1 to 72 (MRMSKLYKNK…IEFGYKLGIK (72 aa)) the chain is on the cytoplasmic side. Positions 8–18 (KNKEKENEKPS) are enriched in basic and acidic residues. Residues 73 to 92 (PSYIVVFGGSALFISLVLGW) form a helical membrane-spanning segment. Topologically, residues 93-94 (GA) are lumenal. The chain crosses the membrane as a helical span at residues 95–113 (ALICNLVGFAYPAYQSFKA). Residues 114 to 123 (VESQGHAETK) are Cytoplasmic-facing. The chain crosses the membrane as a helical span at residues 124-140 (LWLTYWVVFSLFFFIEY). Residues 141–143 (LID) are Lumenal-facing. Residues 144–162 (IILFWIPFYYVIKLLFLLY) traverse the membrane as a helical segment. Residues 163 to 226 (LYMPQVRGAE…VQEGVRRRNV (64 aa)) are Cytoplasmic-facing.

Belongs to the DP1 family. May form oligomers.

The protein resides in the endoplasmic reticulum membrane. In terms of biological role, required to generate and maintain the structure of the tubular endoplasmic reticulum network and the digestive (food) vacuole. Induces high curvature in membranes and causes membrane tubule formation. The polypeptide is Protein YOP1 homolog (Plasmodium berghei (strain Anka)).